We begin with the raw amino-acid sequence, 148 residues long: Snaclec jerdonuxin subunit beta (148 aa).

Positions 1–23 are cleaved as a signal peptide; sequence MVRFIFVSFGLLVVFLSLSGIGA. 3 disulfides stabilise this stretch: cysteine 27–cysteine 38, cysteine 55–cysteine 144, and cysteine 121–cysteine 136. The 112-residue stretch at 34–145 folds into the C-type lectin domain; it reads YDEHCYQVFQ…CSSKRYIVCK (112 aa).

Belongs to the snaclec family. Tetramer of 4 heterodimers of alpha and beta subunits; disulfide-linked. In terms of tissue distribution, expressed by the venom gland.

The protein localises to the secreted. In terms of biological role, snaclec that strongly induces platelet aggregation, in a dose-dependent manner. The chain is Snaclec jerdonuxin subunit beta from Protobothrops jerdonii (Jerdon's pitviper).